The sequence spans 451 residues: Chromosomal replication initiator protein DnaA (451 aa).

Positions 1–72 (MQSIEDIWQE…ANILQEITGR (72 aa)) are domain I, interacts with DnaA modulators. The domain II stretch occupies residues 72–108 (RLFDVRFIDGEQEENFEYTVIKPNPALDEDGIEIGKH). The domain III, AAA+ region stretch occupies residues 109–325 (MLNPRYVFDT…GALIRVVAYS (217 aa)). Residues Gly153, Gly155, Lys156, and Thr157 each contribute to the ATP site. The domain IV, binds dsDNA stretch occupies residues 326 to 451 (SLVNKDITAG…KNLRKAQNMF (126 aa)).

Belongs to the DnaA family. As to quaternary structure, oligomerizes as a right-handed, spiral filament on DNA at oriC.

The protein resides in the cytoplasm. Its function is as follows. Plays an essential role in the initiation and regulation of chromosomal replication. ATP-DnaA binds to the origin of replication (oriC) to initiate formation of the DNA replication initiation complex once per cell cycle. Binds the DnaA box (a 9 base pair repeat at the origin) and separates the double-stranded (ds)DNA. Forms a right-handed helical filament on oriC DNA; dsDNA binds to the exterior of the filament while single-stranded (ss)DNA is stabiized in the filament's interior. The ATP-DnaA-oriC complex binds and stabilizes one strand of the AT-rich DNA unwinding element (DUE), permitting loading of DNA polymerase. After initiation quickly degrades to an ADP-DnaA complex that is not apt for DNA replication. Binds acidic phospholipids. The sequence is that of Chromosomal replication initiator protein DnaA from Listeria monocytogenes serotype 4b (strain F2365).